The primary structure comprises 735 residues: Catalase-peroxidase (735 aa).

A cross-link (tryptophyl-tyrosyl-methioninium (Trp-Tyr) (with M-246)) is located at residues 97 to 220 (WHAAGTYRIG…LAAVQMGLIY (124 aa)). The Proton acceptor role is filled by His98. A cross-link (tryptophyl-tyrosyl-methioninium (Tyr-Met) (with W-97)) is located at residues 220-246 (YVNPEGPNGKPDPMAAAHDIRETFGRM). His261 lines the heme b pocket. The segment at 342–362 (AHQWTPKNPEAASTVPDAHDP) is disordered.

It belongs to the peroxidase family. Peroxidase/catalase subfamily. As to quaternary structure, homodimer or homotetramer. Heme b is required as a cofactor. Post-translationally, formation of the three residue Trp-Tyr-Met cross-link is important for the catalase, but not the peroxidase activity of the enzyme.

The enzyme catalyses H2O2 + AH2 = A + 2 H2O. The catalysed reaction is 2 H2O2 = O2 + 2 H2O. Bifunctional enzyme with both catalase and broad-spectrum peroxidase activity. This is Catalase-peroxidase from Gloeobacter violaceus (strain ATCC 29082 / PCC 7421).